The primary structure comprises 265 residues: Molybdenum-pterin-binding protein MopA (265 aa).

Mop domains lie at 126-192 (RTSN…MLAA) and 198-264 (RISA…ILAM).

This sequence belongs to the ModE family.

The polypeptide is Molybdenum-pterin-binding protein MopA (mopA) (Rhodobacter capsulatus (Rhodopseudomonas capsulata)).